The chain runs to 103 residues: Large ribosomal subunit protein bL21 (103 aa).

Belongs to the bacterial ribosomal protein bL21 family. Part of the 50S ribosomal subunit. Contacts protein L20.

Functionally, this protein binds to 23S rRNA in the presence of protein L20. This chain is Large ribosomal subunit protein bL21, found in Shewanella piezotolerans (strain WP3 / JCM 13877).